Here is a 456-residue protein sequence, read N- to C-terminus: Cysteine--tRNA ligase (456 aa).

Cysteine 28 lines the Zn(2+) pocket. Residues 30–40 (ITVYDHCHLGH) carry the 'HIGH' region motif. Zn(2+) is bound by residues cysteine 209, histidine 234, and glutamate 238. The short motif at 266-270 (KMAKS) is the 'KMSKS' region element. Residue lysine 269 participates in ATP binding.

This sequence belongs to the class-I aminoacyl-tRNA synthetase family. In terms of assembly, monomer. Zn(2+) serves as cofactor.

The protein localises to the cytoplasm. The enzyme catalyses tRNA(Cys) + L-cysteine + ATP = L-cysteinyl-tRNA(Cys) + AMP + diphosphate. The chain is Cysteine--tRNA ligase from Legionella pneumophila subsp. pneumophila (strain Philadelphia 1 / ATCC 33152 / DSM 7513).